The following is a 188-amino-acid chain: Insulin-like peptide INSL6 (188 aa).

Residues 1–22 (MKQLCCSCLLWLGLLLAPFSQE) form the signal peptide. Cystine bridges form between Cys33–Cys169, Cys45–Cys182, and Cys168–Cys173. Positions 53–158 (FSMEEQSPMT…SGLFWGNHPQ (106 aa)) are cleaved as a propeptide — connecting peptide.

This sequence belongs to the insulin family. In terms of tissue distribution, testis and prostate specific.

It is found in the secreted. In terms of biological role, may have a role in sperm development and fertilization. The chain is Insulin-like peptide INSL6 (Insl6) from Rattus norvegicus (Rat).